Reading from the N-terminus, the 329-residue chain is Serine/threonine-protein phosphatase PP2A catalytic subunit (329 aa).

Positions 1 to 25 are disordered; the sequence is MDNNMEIDAARSPEPHHLSPTTDPG. Over residues 8–17 the composition is skewed to basic and acidic residues; that stretch reads DAARSPEPHH. The Mn(2+) site is built by aspartate 77, histidine 79, aspartate 105, and asparagine 137. Histidine 138 acts as the Proton donor in catalysis. Residues histidine 187 and histidine 261 each contribute to the Mn(2+) site. Position 329 is a leucine methyl ester (leucine 329).

This sequence belongs to the PPP phosphatase family. PP-2A subfamily. Requires Mn(2+) as cofactor.

The enzyme catalyses O-phospho-L-seryl-[protein] + H2O = L-seryl-[protein] + phosphate. It carries out the reaction O-phospho-L-threonyl-[protein] + H2O = L-threonyl-[protein] + phosphate. Functionally, involved in hyphal morphogenesis. This chain is Serine/threonine-protein phosphatase PP2A catalytic subunit (pphA), found in Emericella nidulans (strain FGSC A4 / ATCC 38163 / CBS 112.46 / NRRL 194 / M139) (Aspergillus nidulans).